A 72-amino-acid chain; its full sequence is Rubredoxin (72 aa).

Residues D19–G72 enclose the Rubredoxin-like domain. Residues C24, C27, C57, and C60 each coordinate Fe cation.

It belongs to the rubredoxin family. Fe(3+) is required as a cofactor.

Its function is as follows. Rubredoxin is a small nonheme, iron protein lacking acid-labile sulfide. Its single Fe, chelated to 4 Cys, functions as an electron acceptor and may also stabilize the conformation of the molecule. Could be involved in hydrogenase-linked redox processes. This chain is Rubredoxin (hoxR), found in Azotobacter vinelandii.